Consider the following 934-residue polypeptide: 2-oxoglutarate dehydrogenase E1 component (934 aa).

The protein belongs to the alpha-ketoglutarate dehydrogenase family. Homodimer. Part of the 2-oxoglutarate dehydrogenase (OGDH) complex composed of E1 (2-oxoglutarate dehydrogenase), E2 (dihydrolipoamide succinyltransferase) and E3 (dihydrolipoamide dehydrogenase); the complex contains multiple copies of the three enzymatic components (E1, E2 and E3). Thiamine diphosphate is required as a cofactor.

It catalyses the reaction N(6)-[(R)-lipoyl]-L-lysyl-[protein] + 2-oxoglutarate + H(+) = N(6)-[(R)-S(8)-succinyldihydrolipoyl]-L-lysyl-[protein] + CO2. In terms of biological role, E1 component of the 2-oxoglutarate dehydrogenase (OGDH) complex which catalyzes the decarboxylation of 2-oxoglutarate, the first step in the conversion of 2-oxoglutarate to succinyl-CoA and CO(2). This chain is 2-oxoglutarate dehydrogenase E1 component (sucA), found in Coxiella burnetii (strain RSA 493 / Nine Mile phase I).